A 730-amino-acid polypeptide reads, in one-letter code: Matrix metalloproteinase-9 (730 aa).

The first 19 residues, 1–19, serve as a signal peptide directing secretion; that stretch reads MSPWQPLLLALLAFGCSSA. Positions 20–107 are cleaved as a propeptide — activation peptide; that stretch reads APYQRQPTFV…PRCGVPDVGR (88 aa). A glycan (N-linked (GlcNAc...) asparagine) is linked at N39. The Cysteine switch signature appears at 98–105; that stretch reads PRCGVPDV. C100 is a Zn(2+) binding site. N-linked (GlcNAc...) asparagine glycans are attached at residues N120 and N127. 2 residues coordinate Ca(2+): D131 and D165. Residues H175 and D177 each contribute to the Zn(2+) site. D182, G183, D185, and L187 together coordinate Ca(2+). H190 is a Zn(2+) binding site. The Ca(2+) site is built by G197, Q199, and D201. H203 is a binding site for Zn(2+). D205, D206, and E208 together coordinate Ca(2+). 3 consecutive Fibronectin type-II domains span residues 225–273, 283–331, and 342–390; these read SNGA…FCPS, GEGK…FCPT, and SAGE…FCPD. Cystine bridges form between C230/C256, C244/C271, C288/C314, C302/C329, C347/C373, and C361/C388. H401 contributes to the Zn(2+) binding site. Residue E402 is part of the active site. Residues H405 and H411 each contribute to the Zn(2+) site. The disordered stretch occupies residues 442 to 529; that stretch reads LYGRGSKPDP…SEASTESLSP (88 aa). Residues 463–477 are compositionally biased toward pro residues; the sequence is PTAPPTMCPTIPPTA. The segment covering 478-489 has biased composition (low complexity); it reads YPTVGPTVGPTG. The span at 490 to 514 shows a compositional bias: pro residues; it reads APSPGPTSSPSPGPTGAPSPGPTAP. C534 and C729 are oxidised to a cystine. Hemopexin repeat units follow at residues 536-581, 582-626, 628-675, and 676-729; these read VDVF…WPAL, PATL…GLGP, VTHV…FSGV, and PWNS…LLQC.

It belongs to the peptidase M10A family. As to quaternary structure, exists as monomer or homodimer; disulfide-linked. Also exists as heterodimer with LCN2. Macrophages and transformed cell lines produce only the monomeric form. Interacts with ECM1. Zn(2+) serves as cofactor. The cofactor is Ca(2+). N- and O-glycosylated.

The protein resides in the secreted. It localises to the extracellular space. Its subcellular location is the extracellular matrix. It carries out the reaction Cleavage of gelatin types I and V and collagen types IV and V.. Its activity is regulated as follows. Inhibited by histatin-3 1/24 (histatin-5). Inhibited by ECM1. Functionally, matrix metalloproteinase that plays an essential role in local proteolysis of the extracellular matrix and in leukocyte migration. Could play a role in bone osteoclastic resorption. Cleaves KiSS1 at a Gly-|-Leu bond. Cleaves NINJ1 to generate the Secreted ninjurin-1 form. Cleaves type IV and type V collagen into large C-terminal three quarter fragments and shorter N-terminal one quarter fragments. Degrades fibronectin but not laminin or Pz-peptide. The protein is Matrix metalloproteinase-9 (Mmp9) of Mus musculus (Mouse).